Reading from the N-terminus, the 178-residue chain is Large ribosomal subunit protein uL6 (178 aa).

The protein belongs to the universal ribosomal protein uL6 family. In terms of assembly, part of the 50S ribosomal subunit.

Functionally, this protein binds to the 23S rRNA, and is important in its secondary structure. It is located near the subunit interface in the base of the L7/L12 stalk, and near the tRNA binding site of the peptidyltransferase center. The polypeptide is Large ribosomal subunit protein uL6 (Staphylococcus epidermidis (strain ATCC 35984 / DSM 28319 / BCRC 17069 / CCUG 31568 / BM 3577 / RP62A)).